The chain runs to 121 residues: Small ribosomal subunit protein uS13 (121 aa).

The segment at 91-121 (HRRGLPVRGQKTKNNARTRKGPVKTVANKKK) is disordered.

Belongs to the universal ribosomal protein uS13 family. As to quaternary structure, part of the 30S ribosomal subunit. Forms a loose heterodimer with protein S19. Forms two bridges to the 50S subunit in the 70S ribosome.

In terms of biological role, located at the top of the head of the 30S subunit, it contacts several helices of the 16S rRNA. In the 70S ribosome it contacts the 23S rRNA (bridge B1a) and protein L5 of the 50S subunit (bridge B1b), connecting the 2 subunits; these bridges are implicated in subunit movement. Contacts the tRNAs in the A and P-sites. The polypeptide is Small ribosomal subunit protein uS13 (Staphylococcus carnosus (strain TM300)).